The chain runs to 434 residues: Histidine--tRNA ligase (434 aa).

The segment at 412 to 434 is disordered; that stretch reads DQTTVPVEAFPGDHDAPTYEDVV.

It belongs to the class-II aminoacyl-tRNA synthetase family.

Its subcellular location is the cytoplasm. It carries out the reaction tRNA(His) + L-histidine + ATP = L-histidyl-tRNA(His) + AMP + diphosphate + H(+). This chain is Histidine--tRNA ligase, found in Haloquadratum walsbyi (strain DSM 16790 / HBSQ001).